The sequence spans 750 residues: Ribosomal RNA large subunit methyltransferase K/L (750 aa).

The 112-residue stretch at 46–157 (TAYRLCLWSR…RGEAILSLDL (112 aa)) folds into the THUMP domain.

The protein belongs to the methyltransferase superfamily. RlmKL family.

The protein resides in the cytoplasm. The catalysed reaction is guanosine(2445) in 23S rRNA + S-adenosyl-L-methionine = N(2)-methylguanosine(2445) in 23S rRNA + S-adenosyl-L-homocysteine + H(+). The enzyme catalyses guanosine(2069) in 23S rRNA + S-adenosyl-L-methionine = N(2)-methylguanosine(2069) in 23S rRNA + S-adenosyl-L-homocysteine + H(+). Its function is as follows. Specifically methylates the guanine in position 2445 (m2G2445) and the guanine in position 2069 (m7G2069) of 23S rRNA. This Pseudomonas savastanoi pv. phaseolicola (strain 1448A / Race 6) (Pseudomonas syringae pv. phaseolicola (strain 1448A / Race 6)) protein is Ribosomal RNA large subunit methyltransferase K/L.